The primary structure comprises 510 residues: NAD(P)H-quinone oxidoreductase subunit 2 A, chloroplastic (510 aa).

12 consecutive transmembrane segments (helical) span residues 31–51 (FIFPECILIFGLILLLMIDLT), 59–79 (WFYFISSTSLVISITALLFRW), 99–119 (IFQFLILLCSTLCIPLSVEYI), 124–144 (MAITEFLLFVLTATLGGMFLC), 149–169 (LITIFVAPECFSLCSYLLSGY), 183–203 (YLLMGGASSSILVHGFSWLYG), 229–249 (ISIALIFITVGLGFKLSPAPF), 295–315 (WHLLLEILAILSMILGNLLAI), 323–343 (MLAYSSIGQIGYVIIGIIVGD), 354–374 (YMLFYISMNLGTFACIVLFGL), 395–415 (ALSLALCLLSLGGLPPLAGFF), and 418–438 (LYLFWCGWQAGLYFLVSIGLL).

The protein belongs to the complex I subunit 2 family. As to quaternary structure, NDH is composed of at least 16 different subunits, 5 of which are encoded in the nucleus.

The protein resides in the plastid. The protein localises to the chloroplast thylakoid membrane. The enzyme catalyses a plastoquinone + NADH + (n+1) H(+)(in) = a plastoquinol + NAD(+) + n H(+)(out). The catalysed reaction is a plastoquinone + NADPH + (n+1) H(+)(in) = a plastoquinol + NADP(+) + n H(+)(out). NDH shuttles electrons from NAD(P)H:plastoquinone, via FMN and iron-sulfur (Fe-S) centers, to quinones in the photosynthetic chain and possibly in a chloroplast respiratory chain. The immediate electron acceptor for the enzyme in this species is believed to be plastoquinone. Couples the redox reaction to proton translocation, and thus conserves the redox energy in a proton gradient. The chain is NAD(P)H-quinone oxidoreductase subunit 2 A, chloroplastic from Saccharum officinarum (Sugarcane).